A 67-amino-acid chain; its full sequence is MPKMKTKSAAKKRFKITASGKVKAAAAGKRHGMIKRTNKFIRDARGTMVLAEPDGRKVVKNYLPNGL.

Belongs to the bacterial ribosomal protein bL35 family.

The polypeptide is Large ribosomal subunit protein bL35 (Rhizobium etli (strain ATCC 51251 / DSM 11541 / JCM 21823 / NBRC 15573 / CFN 42)).